We begin with the raw amino-acid sequence, 624 residues long: Actin-related protein 8 (624 aa).

The residue at position 1 (Met-1) is an N-acetylmethionine. Over residues 1 to 25 (MTQAEKGEAENGKEKGGEKEKEQRG) the composition is skewed to basic and acidic residues. A disordered region spans residues 1-29 (MTQAEKGEAENGKEKGGEKEKEQRGVKRP). ATP-binding residues include Ser-55 and Thr-56. Ser-132 bears the Phosphoserine mark. 283-286 (DVGD) provides a ligand contact to ATP. Residue Ser-412 is modified to Phosphoserine. The tract at residues 430-462 (SKQEQSAKATADRKSASKPIGFEGDLRGQSSDL) is disordered.

This sequence belongs to the actin family. ARP8 subfamily. As to quaternary structure, component of the chromatin remodeling INO80 complex; specifically part of a complex module associated with the DBINO domain of INO80. Exists as monomers and dimers, but the dimer is most probably the biologically relevant form required for stable interactions with histones that exploits the twofold symmetry of the nucleosome core.

Its subcellular location is the nucleus. The protein resides in the chromosome. In terms of biological role, plays an important role in the functional organization of mitotic chromosomes. Exhibits low basal ATPase activity, and unable to polymerize. Its function is as follows. Proposed core component of the chromatin remodeling INO80 complex which is involved in transcriptional regulation, DNA replication and probably DNA repair. Required for the recruitment of INO80 (and probably the INO80 complex) to sites of DNA damage Strongly prefer nucleosomes and H3-H4 tetramers over H2A-H2B dimers, suggesting it may act as a nucleosome recognition module within the complex. The polypeptide is Actin-related protein 8 (ACTR8) (Bos taurus (Bovine)).